The chain runs to 235 residues: Myb family transcription factor PHL12 (235 aa).

The segment covering 1–12 (MMQSREEIRDDS) has biased composition (basic and acidic residues). The disordered stretch occupies residues 1-20 (MMQSREEIRDDSSSGLVLTT). Residues 20–80 (TDPKPRLRWT…HLQKFRLGKQ (61 aa)) enclose the HTH myb-type domain. The segment at residues 51–76 (PKTIMRVMGVKGLTLYHLKSHLQKFR) is a DNA-binding region (H-T-H motif). The segment at 119–139 (RNMNEMQMEVQRRIEEEVVIE) is coiled coil.

Belongs to the MYB-CC family. As to expression, expressed in phloem and/or cambium.

The protein resides in the nucleus. The sequence is that of Myb family transcription factor PHL12 from Arabidopsis thaliana (Mouse-ear cress).